The chain runs to 113 residues: Cell cycle protein GpsB (113 aa).

A coiled-coil region spans residues 36–65 (IKDYETYAALVKSLRQEIADLKEELARKPQ). Residues 61–82 (ARKPQVSSAPSPSHPDPIDVAA) are disordered.

Belongs to the GpsB family. In terms of assembly, forms polymers through the coiled coil domains. Interacts with PBP1, MreC and EzrA.

The protein resides in the cytoplasm. Its function is as follows. Divisome component that associates with the complex late in its assembly, after the Z-ring is formed, and is dependent on DivIC and PBP2B for its recruitment to the divisome. Together with EzrA, is a key component of the system that regulates PBP1 localization during cell cycle progression. Its main role could be the removal of PBP1 from the cell pole after pole maturation is completed. Also contributes to the recruitment of PBP1 to the division complex. Not essential for septum formation. The sequence is that of Cell cycle protein GpsB from Streptococcus pneumoniae (strain Hungary19A-6).